A 623-amino-acid chain; its full sequence is Oviduct-specific glycoprotein (623 aa).

Positions 1-21 (MWKLLLWVGLVLVLKHHDGAA) are cleaved as a signal peptide. The region spanning 22–385 (HKLVCYFTNW…YVMNDILVRA (364 aa)) is the GH18 domain. A disulfide bridge links cysteine 26 with cysteine 51. Chitin-binding positions include 71 to 72 (LQ), 98 to 101 (GGWN), tyrosine 142, 211 to 214 (LSYD), and tryptophan 355. 2 N-linked (GlcNAc...) asparagine glycosylation sites follow: asparagine 402 and asparagine 441. Disordered stretches follow at residues 539–558 (LTPV…VSPG) and 594–623 (RKIS…PQDG). The segment covering 613 to 623 (TSETGTHPQDG) has biased composition (polar residues).

It belongs to the glycosyl hydrolase 18 family. Oviduct.

The protein resides in the cytoplasmic vesicle. It is found in the secretory vesicle. In terms of biological role, binds to oocyte zona pellucida in vivo. May play a role in the fertilization process and/or early embryonic development. In Papio anubis (Olive baboon), this protein is Oviduct-specific glycoprotein (OVGP1).